Reading from the N-terminus, the 101-residue chain is Small ribosomal subunit protein uS14 (101 aa).

This sequence belongs to the universal ribosomal protein uS14 family. In terms of assembly, part of the 30S ribosomal subunit. Contacts proteins S3 and S10.

Its function is as follows. Binds 16S rRNA, required for the assembly of 30S particles and may also be responsible for determining the conformation of the 16S rRNA at the A site. This is Small ribosomal subunit protein uS14 from Shewanella amazonensis (strain ATCC BAA-1098 / SB2B).